The primary structure comprises 223 residues: Ras-related protein Rab-21 (223 aa).

N-acetylalanine is present on Ala2. GTP is bound by residues Gly26, Gly29, Lys30, Thr31, Ser32, Asn43, Asp44, His46, Thr48, and Thr49. Thr31 contacts Mg(2+). The Switch 1 signature appears at 41–54 (KFNDKHITTLQASF). Mg(2+) is bound by residues Thr49 and Asp72. A Switch 2 motif is present at residues 74-92 (AGQERFHALGPIYYRDSNG). 6 residues coordinate GTP: Gly75, Asn130, Lys131, Asp133, Ala161, and Lys162. S-geranylgeranyl cysteine attachment occurs at residues Cys219 and Cys220. At Cys220 the chain carries Cysteine methyl ester. Residues 221–223 (SSG) constitute a propeptide, removed in mature form.

This sequence belongs to the small GTPase superfamily. Rab family. In terms of assembly, interacts with the cytoplasmic tail of integrins ITGA1, ITGA2, ITGA5, ITGA6, ITGA11 and ITGB1; this interaction is dependent upon its GDP/GTP cycle. Interacts with RABGEF1 (via VPS9 domain). Interacts with ANKRD27. Interacts (in GTP-bound form) with VAMP8 in response to starvation; the interaction probably regulates VAMP8 endolysosomal trafficking. Interacts (active GTP-bound form) with TMED10; the interaction is indirect and regulates TMED10 abundance and localization at the Golgi. Requires Mg(2+) as cofactor.

Its subcellular location is the endoplasmic reticulum membrane. The protein localises to the golgi apparatus. The protein resides in the trans-Golgi network. It localises to the golgi apparatus membrane. It is found in the early endosome membrane. Its subcellular location is the cytoplasmic vesicle membrane. The protein localises to the cleavage furrow. The protein resides in the cell projection. It localises to the neuron projection. It carries out the reaction GTP + H2O = GDP + phosphate + H(+). With respect to regulation, regulated by guanine nucleotide exchange factors (GEFs) including ANKRD27 and RABGEF1, which promote the exchange of bound GDP for free GTP. Regulated by GTPase activating proteins (GAPs) which increase the GTP hydrolysis activity. Inhibited by GDP dissociation inhibitors (GDIs). Functionally, the small GTPases Rab are key regulators of intracellular membrane trafficking, from the formation of transport vesicles to their fusion with membranes. Rabs cycle between an inactive GDP-bound form and an active GTP-bound form that is able to recruit to membranes different sets of downstream effectors directly responsible for vesicle formation, movement, tethering and fusion. RAB21 is involved in membrane trafficking control. Regulates integrin internalization and recycling, but does not influence the traffic of endosomally translocated receptors in general. As a result, may regulate cell adhesion and migration. During the mitosis of adherent cells, controls the endosomal trafficking of integrins which is required for the successful completion of cytokinesis. Involved in neurite growth. Following SBF2/MTMT13-mediated activation in response to starvation-induced autophagy, binds to and regulates SNARE protein VAMP8 endolysosomal transport required for SNARE-mediated autophagosome-lysosome fusion. Modulates protein levels of the cargo receptors TMED2 and TMED10, and required for appropriate Golgi localization of TMED10. The polypeptide is Ras-related protein Rab-21 (Rattus norvegicus (Rat)).